The primary structure comprises 701 residues: Elongation factor G (701 aa).

The region spanning 8–290 (SLYRNIGISA…AVVELLPAPT (283 aa)) is the tr-type G domain. Residues 17-24 (AHIDAGKT), 88-92 (DTPGH), and 142-145 (NKMD) contribute to the GTP site.

The protein belongs to the TRAFAC class translation factor GTPase superfamily. Classic translation factor GTPase family. EF-G/EF-2 subfamily.

Its subcellular location is the cytoplasm. Its function is as follows. Catalyzes the GTP-dependent ribosomal translocation step during translation elongation. During this step, the ribosome changes from the pre-translocational (PRE) to the post-translocational (POST) state as the newly formed A-site-bound peptidyl-tRNA and P-site-bound deacylated tRNA move to the P and E sites, respectively. Catalyzes the coordinated movement of the two tRNA molecules, the mRNA and conformational changes in the ribosome. The sequence is that of Elongation factor G from Neisseria meningitidis serogroup C (strain 053442).